Here is a 273-residue protein sequence, read N- to C-terminus: Undecaprenyl-diphosphatase (273 aa).

Helical transmembrane passes span 4 to 24, 43 to 63, 83 to 103, 109 to 129, 184 to 204, 218 to 238, and 248 to 268; these read FLLL…FLPI, KGKV…CWEY, FVLN…LFIK, LFHP…ILWA, ATEF…FYDL, VFAI…RGLL, and VFAW…YSGM.

This sequence belongs to the UppP family.

Its subcellular location is the cell inner membrane. The catalysed reaction is di-trans,octa-cis-undecaprenyl diphosphate + H2O = di-trans,octa-cis-undecaprenyl phosphate + phosphate + H(+). Its function is as follows. Catalyzes the dephosphorylation of undecaprenyl diphosphate (UPP). Confers resistance to bacitracin. In Nitrosospira multiformis (strain ATCC 25196 / NCIMB 11849 / C 71), this protein is Undecaprenyl-diphosphatase.